Here is a 398-residue protein sequence, read N- to C-terminus: Acetate kinase (398 aa).

Asn7 lines the Mg(2+) pocket. Lys14 lines the ATP pocket. Position 85 (Arg85) interacts with substrate. The active-site Proton donor/acceptor is Asp142. Residues 202-206 (HLGNG), 277-279 (DMR), and 325-329 (GIGEN) contribute to the ATP site. Residue Glu379 participates in Mg(2+) binding.

It belongs to the acetokinase family. As to quaternary structure, homodimer. Mg(2+) is required as a cofactor. The cofactor is Mn(2+).

It localises to the cytoplasm. It catalyses the reaction acetate + ATP = acetyl phosphate + ADP. The protein operates within metabolic intermediate biosynthesis; acetyl-CoA biosynthesis; acetyl-CoA from acetate: step 1/2. Catalyzes the formation of acetyl phosphate from acetate and ATP. Can also catalyze the reverse reaction. The chain is Acetate kinase from Deinococcus radiodurans (strain ATCC 13939 / DSM 20539 / JCM 16871 / CCUG 27074 / LMG 4051 / NBRC 15346 / NCIMB 9279 / VKM B-1422 / R1).